The primary structure comprises 55 residues: MAECDDRPNLVERAVMKLGEPKNQARLLQVAWRISLLMMVIGFIIIIKTISPNFM.

As to quaternary structure, has multiple subunits, A(3), B(3), C, D, E, F, G, I and K(x); there may be a few other subunits as well.

Its subcellular location is the cell membrane. Functionally, component of the A-type ATP synthase that produces ATP from ADP in the presence of a proton gradient across the membrane. This is A-type ATP synthase subunit G (atpG) from Methanosarcina mazei (strain ATCC BAA-159 / DSM 3647 / Goe1 / Go1 / JCM 11833 / OCM 88) (Methanosarcina frisia).